A 246-amino-acid polypeptide reads, in one-letter code: Putative S-adenosyl-L-methionine-dependent methyltransferase Mflv_0168 (246 aa).

S-adenosyl-L-methionine is bound by residues Asp-112 and 141–142; that span reads DL.

The protein belongs to the UPF0677 family.

Its function is as follows. Exhibits S-adenosyl-L-methionine-dependent methyltransferase activity. The chain is Putative S-adenosyl-L-methionine-dependent methyltransferase Mflv_0168 from Mycolicibacterium gilvum (strain PYR-GCK) (Mycobacterium gilvum (strain PYR-GCK)).